The chain runs to 285 residues: Golgi to ER traffic protein 2 (285 aa).

The span at 1-10 shows a compositional bias: basic and acidic residues; sequence MSELTEAEKR. 2 disordered regions span residues 1-72 and 87-106; these read MSEL…KEDS and MQGQ…PDLL. Ser-2 carries the post-translational modification N-acetylserine. Residues 2–148 lie on the Cytoplasmic side of the membrane; the sequence is SELTEAEKRR…LDYHDYLLNR (147 aa). Positions 11–20 are enriched in basic residues; that stretch reads RLLRERRQKK. Over residues 24–42 the composition is skewed to polar residues; sequence GGASSRLNKITGQASSHLN. Phosphoserine is present on Ser-45. Residues 49–60 show a composition bias toward low complexity; that stretch reads APSAAKTTPPAS. Over residues 93–104 the composition is skewed to polar residues; that stretch reads GKSTPQDSSTPD. A helical membrane pass occupies residues 149 to 169; sequence LKAWTILVKWVFFLLPYLYLI. The Lumenal portion of the chain corresponds to 170 to 196; the sequence is TRPNSSVWPAYAFTQSAWFAPLRNPSN. Asn-173 and Asn-196 each carry an N-linked (GlcNAc...) asparagine glycan. The chain crosses the membrane as a helical span at residues 197–216; it reads FTRIFATFEFLSISIYYQLL. At 217 to 263 the chain is on the cytoplasmic side; it reads KNVEHKSKIKNLQDTNKLVKLVSLVPEGVIPVANLKGKLITLLQYWD. A helical transmembrane segment spans residues 264-284; that stretch reads LLSMLITDISFVLIVLGLLTY. Residue Leu-285 is a topological domain, lumenal.

Belongs to the GET2 family. As to quaternary structure, component of the Golgi to ER traffic (GET) complex, which is composed of GET1, GET2 and GET3. Within the complex, GET1 and GET2 form a heterotetramer which is stabilized by phosphatidylinositol binding and which binds to the GET3 homodimer.

It localises to the endoplasmic reticulum membrane. The protein localises to the golgi apparatus membrane. Functionally, required for the post-translational delivery of tail-anchored (TA) proteins to the endoplasmic reticulum. Together with GET1, acts as a membrane receptor for soluble GET3, which recognizes and selectively binds the transmembrane domain of TA proteins in the cytosol. The GET complex cooperates with the HDEL receptor ERD2 to mediate the ATP-dependent retrieval of resident ER proteins that contain a C-terminal H-D-E-L retention signal from the Golgi to the ER. Involved in DNA replication and DNA damage response and also in cell wall function. The polypeptide is Golgi to ER traffic protein 2 (Saccharomyces cerevisiae (strain RM11-1a) (Baker's yeast)).